Here is a 59-residue protein sequence, read N- to C-terminus: Large ribosomal subunit protein bL32c (59 aa).

Positions 1-19 (MAVPKKRTSKAKKNARKAN) are enriched in basic residues. The disordered stretch occupies residues 1-24 (MAVPKKRTSKAKKNARKANWKNQA).

This sequence belongs to the bacterial ribosomal protein bL32 family.

It localises to the plastid. Its subcellular location is the chloroplast. The chain is Large ribosomal subunit protein bL32c (rpl32) from Porphyra purpurea (Red seaweed).